The chain runs to 264 residues: Thymidylate synthase (264 aa).

Arginine 21 is a binding site for dUMP. Histidine 51 provides a ligand contact to (6R)-5,10-methylene-5,6,7,8-tetrahydrofolate. 126–127 (RR) contacts dUMP. Catalysis depends on cysteine 146, which acts as the Nucleophile. DUMP-binding positions include 166-169 (RSAD), asparagine 177, and 207-209 (HIY). Aspartate 169 provides a ligand contact to (6R)-5,10-methylene-5,6,7,8-tetrahydrofolate. A (6R)-5,10-methylene-5,6,7,8-tetrahydrofolate-binding site is contributed by alanine 263.

The protein belongs to the thymidylate synthase family. Bacterial-type ThyA subfamily. As to quaternary structure, homodimer.

It is found in the cytoplasm. The catalysed reaction is dUMP + (6R)-5,10-methylene-5,6,7,8-tetrahydrofolate = 7,8-dihydrofolate + dTMP. The protein operates within pyrimidine metabolism; dTTP biosynthesis. In terms of biological role, catalyzes the reductive methylation of 2'-deoxyuridine-5'-monophosphate (dUMP) to 2'-deoxythymidine-5'-monophosphate (dTMP) while utilizing 5,10-methylenetetrahydrofolate (mTHF) as the methyl donor and reductant in the reaction, yielding dihydrofolate (DHF) as a by-product. This enzymatic reaction provides an intracellular de novo source of dTMP, an essential precursor for DNA biosynthesis. The chain is Thymidylate synthase from Ruthia magnifica subsp. Calyptogena magnifica.